The sequence spans 450 residues: MNNKRHSTNEQLSLDEINNTIKFDHRSSNKQKFLSFLGPGLLVAVGYMDPGNWITSMQGGAQYGYTLLFVILISSLSAMLLQSMTVRLGIATGMDLAQMTRHYLSRPIAIIFWIIAELAIIATDIAEVIGSAIALNLLFNIPLIVGALITVLDVFLLLFIMKYGFRKIEAIVGTLIFTVLFIFIFEVYISSPQLNAVLNGFIPHSEIITNNGILYIALGIIGATIMPHNLYLHSSIVQSRTYSRHNNEEKAQAIKFATIDSNIQLSIAFVVNCLLLVLGASLFFNSNADDLGGFYDLYHALKTEPVLGATMGAIMSTLFAVALLASGQNSTITGTLAGQIVMEGFLRLHIPNWLRRLITRSLAVIPVIVCLIIFKGNAAKIEQLLVFSQVFLSIALPFCLIPLQLATSNKDLMGPFYNKTWVNIISWTLIIILSILNVYLIVQTFQELQS.

11 helical membrane-spanning segments follow: residues Leu-34–Ile-54, Ala-61–Leu-81, Ile-108–Val-128, Ile-141–Met-161, Ala-170–Ser-190, Gly-212–Leu-232, Ile-263–Phe-283, Pro-305–Ala-325, Ser-361–Ile-381, Gln-383–Leu-403, and Val-422–Val-442.

Belongs to the NRAMP family.

Its subcellular location is the cell membrane. H(+)-stimulated, divalent metal cation uptake system. The protein is Divalent metal cation transporter MntH of Staphylococcus aureus (strain JH1).